The primary structure comprises 495 residues: MKYILSLDQGTTSSRAVIFDKNANIKGFAKKEFKQIYPHPSWVEHDPNEIWGSLLGVMAEALANARTFPNNIEAIGITNQRETTIIWDRNTGHPIYNAIVWQDRRTAQLCDELKSKGKDKIFLQKTGLVLDAYFSGTKIKWILDNVAGARKRAEKGELCFGTIDTWIVWNLTKGKIHITDYSNASRTLLLNIKSLKWDCDLLQILDIPKSLLPELKQSSEVYGKTDASALGTEIIISGIAGDQFAATFGQACLQKGMAKNTYGTGCFVTVNIGKKPIINEQKILTSIAWGRKNSITYVFEGSVFIGGAVIQWLRDNLELFRKSGDAEAVAASVDNNGGIYFVPAFVGLGTPHWDPYARGMIIGLTRSSTKEHITRAALESIALQSFDVLTEMQNSIQEFEIKELRVDGGASKNNLLMQFQADILQCNVVRPKITETTALGSAYLAGLAVGYWESAEEITSLWKSDKIFEPSMEKSKREDLIYNWNKAIKRAKAWI.

Threonine 11 is a binding site for ADP. The ATP site is built by threonine 11, threonine 12, and serine 13. Threonine 11 provides a ligand contact to sn-glycerol 3-phosphate. Residue arginine 15 coordinates ADP. Sn-glycerol 3-phosphate is bound by residues arginine 81, glutamate 82, tyrosine 133, and aspartate 242. Glycerol-binding residues include arginine 81, glutamate 82, tyrosine 133, aspartate 242, and glutamine 243. Residues threonine 264 and glycine 307 each contribute to the ADP site. Threonine 264, glycine 307, glutamine 311, and glycine 409 together coordinate ATP. Residues glycine 409 and asparagine 413 each coordinate ADP.

It belongs to the FGGY kinase family.

It carries out the reaction glycerol + ATP = sn-glycerol 3-phosphate + ADP + H(+). The protein operates within polyol metabolism; glycerol degradation via glycerol kinase pathway; sn-glycerol 3-phosphate from glycerol: step 1/1. Inhibited by fructose 1,6-bisphosphate (FBP). Key enzyme in the regulation of glycerol uptake and metabolism. Catalyzes the phosphorylation of glycerol to yield sn-glycerol 3-phosphate. This chain is Glycerol kinase, found in Borrelia hermsii (strain HS1 / DAH).